Consider the following 400-residue polypeptide: 1-deoxy-D-xylulose 5-phosphate reductoisomerase (400 aa).

Residues T10, G11, S12, I13, G36, N38, and N124 each coordinate NADPH. K125 is a 1-deoxy-D-xylulose 5-phosphate binding site. E126 contributes to the NADPH binding site. Mn(2+) is bound at residue D150. The 1-deoxy-D-xylulose 5-phosphate site is built by S151, E152, S186, and H209. E152 is a Mn(2+) binding site. G215 provides a ligand contact to NADPH. S222, N227, K228, and E231 together coordinate 1-deoxy-D-xylulose 5-phosphate. Mn(2+) is bound at residue E231.

This sequence belongs to the DXR family. Mg(2+) is required as a cofactor. The cofactor is Mn(2+).

It catalyses the reaction 2-C-methyl-D-erythritol 4-phosphate + NADP(+) = 1-deoxy-D-xylulose 5-phosphate + NADPH + H(+). It participates in isoprenoid biosynthesis; isopentenyl diphosphate biosynthesis via DXP pathway; isopentenyl diphosphate from 1-deoxy-D-xylulose 5-phosphate: step 1/6. Functionally, catalyzes the NADPH-dependent rearrangement and reduction of 1-deoxy-D-xylulose-5-phosphate (DXP) to 2-C-methyl-D-erythritol 4-phosphate (MEP). This Aliivibrio fischeri (strain ATCC 700601 / ES114) (Vibrio fischeri) protein is 1-deoxy-D-xylulose 5-phosphate reductoisomerase.